Reading from the N-terminus, the 332-residue chain is Cytochrome c1, heme protein, mitochondrial (332 aa).

The transit peptide at 1 to 70 (MLARTCLRST…YYHLYGFASA (70 aa)) directs the protein to the mitochondrion. Topologically, residues 71 to 277 (MTPAEEGLHA…AEPEMDDRKR (207 aa)) are mitochondrial intermembrane. The region spanning 97–250 (QALRRGFQVY…GLVDYEDGTP (154 aa)) is the Cytochrome c domain. Residues Cys-110, Cys-113, and His-114 each contribute to the heme c site. The segment covering 139-151 (EENEYDTEPNDQG) has biased composition (acidic residues). Residues 139-162 (EENEYDTEPNDQGEIEKRPGKLSD) form a disordered region. Met-234 contributes to the heme c binding site. Residues 278-296 (MGMKVLVVTSVLFALSVYV) traverse the membrane as a helical segment. The Mitochondrial matrix portion of the chain corresponds to 297–332 (KRYKWAWLKSRKIVYDPPKSPPPATNLALPQQRAKS).

Belongs to the cytochrome c family. Component of the ubiquinol-cytochrome c oxidoreductase (cytochrome b-c1 complex, complex III, CIII), a multisubunit enzyme composed of 10 subunits. The complex is composed of 3 respiratory subunits cytochrome b (cob), cytochrome c1 (cyt-1) and Rieske protein (fes-1), 2 core protein subunits pep and ucr-1, and 5 low-molecular weight protein subunits qcr6, qcr7, qcr8, qcr9 and probably NCU16844/qcr10. The complex exists as an obligatory dimer and forms supercomplexes (SCs) in the inner mitochondrial membrane with NADH-ubiquinone oxidoreductase (complex I, CI) and cytochrome c oxidase (complex IV, CIV), resulting in different assemblies (supercomplexes SCI(1)III(2), SCIII(2)IV(1) and SCIII(2)IV(2) as well as higher order I(x)III(y)IV(z) megacomplexes). The cofactor is heme c.

It localises to the mitochondrion inner membrane. It catalyses the reaction a quinol + 2 Fe(III)-[cytochrome c](out) = a quinone + 2 Fe(II)-[cytochrome c](out) + 2 H(+)(out). Component of the ubiquinol-cytochrome c oxidoreductase, a multisubunit transmembrane complex that is part of the mitochondrial electron transport chain which drives oxidative phosphorylation. The respiratory chain contains 3 multisubunit complexes succinate dehydrogenase (complex II, CII), ubiquinol-cytochrome c oxidoreductase (cytochrome b-c1 complex, complex III, CIII) and cytochrome c oxidase (complex IV, CIV), that cooperate to transfer electrons derived from NADH and succinate to molecular oxygen, creating an electrochemical gradient over the inner membrane that drives transmembrane transport and the ATP synthase. The cytochrome b-c1 complex catalyzes electron transfer from ubiquinol to cytochrome c, linking this redox reaction to translocation of protons across the mitochondrial inner membrane, with protons being carried across the membrane as hydrogens on the quinol. In the process called Q cycle, 2 protons are consumed from the matrix, 4 protons are released into the intermembrane space and 2 electrons are passed to cytochrome c. Cytochrome c1 is a catalytic core subunit containing a c-type heme. It transfers electrons from the [2Fe-2S] iron-sulfur cluster of the Rieske protein to cytochrome c. This chain is Cytochrome c1, heme protein, mitochondrial (cyt-1), found in Neurospora crassa (strain ATCC 24698 / 74-OR23-1A / CBS 708.71 / DSM 1257 / FGSC 987).